Reading from the N-terminus, the 791-residue chain is Cytochrome c oxidase polypeptide I+III (791 aa).

The interval 1-473 (MAITAKPKAG…LLSTIGAYIL (473 aa)) is COX1. The helical transmembrane segment at 29–49 (LMYTATAFFAFALAGVFSLLI) threads the bilayer. H73 provides a ligand contact to Fe(II)-heme a. 17 consecutive transmembrane segments (helical) span residues 78–98 (LFFF…VPLM), 111–131 (AFSY…YFFP), 155–175 (FYLA…ANFV), 201–221 (ASVL…LVLL), 244–264 (FFWF…LGIL), 282–302 (MVWA…HHMF), 312–332 (IAFA…LFNI), 347–367 (LYWV…GVML), 381–401 (FVVA…AFAG), 423–443 (FWLF…LGYL), 464–484 (LLST…IYTM), 566–586 (FAFF…WVFL), 617–637 (AWMG…ILIA), 657–677 (LWLA…VHFA), 691–711 (FGLL…SWEF), 729–749 (FFTI…GLIL), and 771–791 (SMYW…FYVW). Residues H250, Y254, H299, and H300 each coordinate Cu cation. Positions 250 to 254 (HPTVY) form a cross-link, 1'-histidyl-3'-tyrosine (His-Tyr). Residue H385 participates in heme a3 binding. H387 provides a ligand contact to Fe(II)-heme a. Residues 545–791 (DPAHIHLPNS…LVIVTIFYVW (247 aa)) are COX3.

It in the N-terminal section; belongs to the heme-copper respiratory oxidase family. The protein in the C-terminal section; belongs to the cytochrome c oxidase subunit 3 family. Possibly a heterodimer of A-protein (contains: cytochrome c oxidase subunits I and III) and subunit II. The A-protein could also present a precursor form of subunits I and III. Requires Cu(2+) as cofactor. The cofactor is heme.

The protein resides in the cell membrane. The catalysed reaction is 4 Fe(II)-[cytochrome c] + O2 + 8 H(+)(in) = 4 Fe(III)-[cytochrome c] + 2 H2O + 4 H(+)(out). Its pathway is energy metabolism; oxidative phosphorylation. In terms of biological role, cytochrome c oxidase is the component of the respiratory chain that catalyzes the reduction of oxygen to water. Subunits 1-3 form the functional core of the enzyme complex. Co I is the catalytic subunit of the enzyme. Electrons originating in cytochrome c are transferred via the copper A center of subunit 2 and heme a of subunit 1 to the bimetallic center formed by heme a3 and copper B. This cytochrome c oxidase shows proton pump activity across the membrane in addition to the electron transfer. In Thermus thermophilus (strain ATCC 27634 / DSM 579 / HB8), this protein is Cytochrome c oxidase polypeptide I+III (caaA).